We begin with the raw amino-acid sequence, 162 residues long: Peroxiredoxin-2D (162 aa).

Positions 4–162 constitute a Thioredoxin domain; that stretch reads ITVGDVVPDG…SSAEDILKAL (159 aa). Cys51 (cysteine sulfenic acid (-SOH) intermediate) is an active-site residue.

It belongs to the peroxiredoxin family. Prx5 subfamily. As to quaternary structure, monomer. As to expression, exclusively expressed in buds and flowers. Also detected in pollen.

It is found in the cytoplasm. It carries out the reaction [glutaredoxin]-dithiol + a hydroperoxide = [glutaredoxin]-disulfide + an alcohol + H2O. Thiol-specific peroxidase that catalyzes the reduction of hydrogen peroxide and organic hydroperoxides to water and alcohols, respectively. Plays a role in cell protection against oxidative stress by detoxifying peroxides. May be involved in intracellular redox signaling. The chain is Peroxiredoxin-2D (PRXIID) from Arabidopsis thaliana (Mouse-ear cress).